Here is a 181-residue protein sequence, read N- to C-terminus: MAASNALLLISGALLISLAVLCQGDPVVDSDGDAVQLNLGGRYPLYTIESAAIGFHGGLSTLHKDVCKSYVYEAPETDRGLPVSFSASATSEPVMQLGSRYKFSFLMPVPRICDTAWSVGKSTEETGVYKLAACSCEFCKIACPEVGSFNVNGKTLLGIGGEHFTVRFHKSDALAMKTAPQ.

The first 24 residues, 1-24 (MAASNALLLISGALLISLAVLCQG), serve as a signal peptide directing secretion. Disulfide bonds link Cys67–Cys113, Cys134–Cys143, and Cys136–Cys139.

Belongs to the protease inhibitor I3 (leguminous Kunitz-type inhibitor) family.

It localises to the secreted. Possesses two reactive sites. Inhibits two molecules of trypsin simultaneously. Inhibits efficiently kallikrein, but chymotrypsin weakly. This is Proteinase inhibitor B from Sagittaria sagittifolia (Arrowhead).